Consider the following 834-residue polypeptide: Serine/threonine-protein kinase TNNI3K (834 aa).

A lipid anchor (N-myristoyl glycine) is attached at glycine 2. Positions 21 to 49 form a coiled coil; the sequence is SESYAIIIERLEDDLQIKENEFQELRHIF. ANK repeat units lie at residues 66-96, 100-129, 133-162, 166-195, 199-229, 233-262, 268-297, 303-334, 338-367, and 380-409; these read RGLS…RPSR, NGFP…DVQQ, GGLT…NVNV, VFFT…DVNV, VGDR…DVNA, EDHV…EVQP, YGDT…TESL, FSET…NINH, DGHT…DMNL, and DEQT…PQDE. The Protein kinase domain occupies 462–722; it reads IEFHEIIGSG…EVVRKLEECL (261 aa). Residues 468–476 and lysine 489 each bind ATP; that span reads IGSGSFGKV. The active-site Proton acceptor is the aspartate 587. Positions 815–834 are disordered; the sequence is PMSPMHLHSRRNSGSFEDGN.

Belongs to the protein kinase superfamily. TKL Ser/Thr protein kinase family. MAP kinase kinase kinase subfamily. Interacts with TNNI3, ACTC, ACTA1, MYBPC3, AIP, FABP3 and HADHB. Mg(2+) is required as a cofactor. Post-translationally, autophosphorylated.

The protein resides in the nucleus. It localises to the cytoplasm. It carries out the reaction L-seryl-[protein] + ATP = O-phospho-L-seryl-[protein] + ADP + H(+). The catalysed reaction is L-threonyl-[protein] + ATP = O-phospho-L-threonyl-[protein] + ADP + H(+). Functionally, may play a role in cardiac physiology. This is Serine/threonine-protein kinase TNNI3K from Mus musculus (Mouse).